A 144-amino-acid chain; its full sequence is L-fucose mutarotase (144 aa).

The active-site Proton donor is His22. Residues Asp30, Arg109, and 131 to 133 (YGN) each bind substrate.

It belongs to the RbsD / FucU family. FucU mutarotase subfamily. As to quaternary structure, homodecamer.

Its subcellular location is the cytoplasm. The catalysed reaction is alpha-L-fucose = beta-L-fucose. The protein operates within carbohydrate metabolism; L-fucose metabolism. In terms of biological role, involved in the anomeric conversion of L-fucose. The protein is L-fucose mutarotase of Haemophilus influenzae (strain PittEE).